The primary structure comprises 354 residues: Guanine nucleotide-binding protein G(o) subunit alpha (354 aa).

The N-myristoyl glycine moiety is linked to residue Gly2. Residue Cys3 is the site of S-palmitoyl cysteine attachment. Residues 32–354 (KDVKLLLLGA…ANNLRGCGLY (323 aa)) enclose the G-alpha domain. Positions 35–48 (KLLLLGAGESGKST) are G1 motif. GTP-binding residues include Glu43, Lys46, Ser47, Thr48, Ser152, Leu176, Arg177, Thr178, and Arg179. Ser47 is a Mg(2+) binding site. Positions 174–182 (DILRTRVKT) are G2 motif. An ADP-ribosylarginine; by cholera toxin modification is found at Arg179. Thr182 lines the Mg(2+) pocket. Positions 197 to 206 (FRLFDVGGQR) are G3 motif. Position 205 is a 5-glutamyl histamine (Gln205). A G4 motif region spans residues 266-273 (ILFLNKKD). Residues Asn270, Asp273, and Cys325 each contribute to the GTP site. Residues 324-329 (TCATDT) form a G5 motif region. The S-palmitoyl cysteine moiety is linked to residue Cys351. Cys351 is subject to ADP-ribosylcysteine; by pertussis toxin.

It belongs to the G-alpha family. G(i/o/t/z) subfamily. G proteins are composed of 3 units; alpha, beta and gamma. The alpha chain contains the guanine nucleotide binding site. Forms a complex with GNB1 and GNG3. Interacts with RGS14. Interacts with RGS16. Interacts with RGS19. Interacts (when palmitoylated) with ADGRG3. In terms of processing, histaminylated at Gln-205 residues by TGM2. Post-translationally, palmitoylated at Cys-351, leading to binding to ADGRG3.

It localises to the cell membrane. The protein localises to the membrane. The catalysed reaction is GTP + H2O = GDP + phosphate + H(+). The GTPase activity is promoted by GTPAse activators, such as RGS14, RGS16 and RGS19. Functionally, guanine nucleotide-binding proteins (G proteins) function as transducers downstream of G protein-coupled receptors (GPCRs) in numerous signaling cascades. The alpha chain contains the guanine nucleotide binding site and alternates between an active, GTP-bound state and an inactive, GDP-bound state. Signaling by an activated GPCR promotes GDP release and GTP binding. The alpha subunit has a low GTPase activity that converts bound GTP to GDP, thereby terminating the signal. Both GDP release and GTP hydrolysis are modulated by numerous regulatory proteins. Signaling is mediated via effector proteins, such as adenylate cyclase. Inhibits adenylate cyclase activity, leading to decreased intracellular cAMP levels. In Homo sapiens (Human), this protein is Guanine nucleotide-binding protein G(o) subunit alpha (GNAO1).